A 431-amino-acid chain; its full sequence is Enolase (431 aa).

Residue Gln-167 coordinates (2R)-2-phosphoglycerate. Glu-209 (proton donor) is an active-site residue. Mg(2+) is bound by residues Asp-246, Glu-290, and Asp-317. 4 residues coordinate (2R)-2-phosphoglycerate: Lys-342, Arg-371, Ser-372, and Lys-393. Catalysis depends on Lys-342, which acts as the Proton acceptor.

Belongs to the enolase family. In terms of assembly, component of the RNA degradosome, a multiprotein complex involved in RNA processing and mRNA degradation. Mg(2+) is required as a cofactor.

The protein localises to the cytoplasm. Its subcellular location is the secreted. It is found in the cell surface. The catalysed reaction is (2R)-2-phosphoglycerate = phosphoenolpyruvate + H2O. It participates in carbohydrate degradation; glycolysis; pyruvate from D-glyceraldehyde 3-phosphate: step 4/5. Catalyzes the reversible conversion of 2-phosphoglycerate (2-PG) into phosphoenolpyruvate (PEP). It is essential for the degradation of carbohydrates via glycolysis. The protein is Enolase of Yersinia pseudotuberculosis serotype O:1b (strain IP 31758).